The sequence spans 375 residues: GTPase HflX (375 aa).

The 178-residue stretch at 194–371 folds into the Hflx-type G domain; the sequence is PHIAIVGYAS…RIATLLAGTK (178 aa). GTP-binding positions include 200–207, 225–229, 246–249, 314–317, and 349–351; these read GYASAGKT, FTTIT, DTVG, NKID, and SAK. Mg(2+) contacts are provided by T207 and T227.

Belongs to the TRAFAC class OBG-HflX-like GTPase superfamily. HflX GTPase family. Monomer. Associates with the 50S ribosomal subunit. Mg(2+) is required as a cofactor.

It is found in the cytoplasm. Functionally, GTPase that associates with the 50S ribosomal subunit and may have a role during protein synthesis or ribosome biogenesis. The sequence is that of GTPase HflX from Hyperthermus butylicus (strain DSM 5456 / JCM 9403 / PLM1-5).